A 123-amino-acid chain; its full sequence is Small ribosomal subunit protein uS12c (123 aa).

This sequence belongs to the universal ribosomal protein uS12 family. Part of the 30S ribosomal subunit.

The protein resides in the plastid. It is found in the chloroplast. With S4 and S5 plays an important role in translational accuracy. Located at the interface of the 30S and 50S subunits. The chain is Small ribosomal subunit protein uS12c (rps12) from Oenothera elata subsp. hookeri (Hooker's evening primrose).